The chain runs to 626 residues: Elongation factor 4 (626 aa).

The tr-type G domain occupies 14 to 195 (SLIRNFCIIA…RIVVDVPAPT (182 aa)). GTP-binding positions include 26–31 (DHGKST) and 142–145 (NKID). The interval 603 to 626 (LSTGEGGNDRDTKDKIRAAQKSEG) is disordered. Residues 609–626 (GNDRDTKDKIRAAQKSEG) are compositionally biased toward basic and acidic residues.

Belongs to the TRAFAC class translation factor GTPase superfamily. Classic translation factor GTPase family. LepA subfamily.

It is found in the cell membrane. The catalysed reaction is GTP + H2O = GDP + phosphate + H(+). In terms of biological role, required for accurate and efficient protein synthesis under certain stress conditions. May act as a fidelity factor of the translation reaction, by catalyzing a one-codon backward translocation of tRNAs on improperly translocated ribosomes. Back-translocation proceeds from a post-translocation (POST) complex to a pre-translocation (PRE) complex, thus giving elongation factor G a second chance to translocate the tRNAs correctly. Binds to ribosomes in a GTP-dependent manner. In Bifidobacterium animalis subsp. lactis (strain AD011), this protein is Elongation factor 4.